A 384-amino-acid chain; its full sequence is Histone acetyltransferase type B subunit 2 (384 aa).

5 WD repeats span residues 156–196, 203–243, 247–287, 291–331, and 348–384; these read GHSA…SSIS, RHET…CIHA, AHTS…QPLH, GHSK…AEVP, and GHTS…PQPE.

It belongs to the WD repeat RBAP46/RBAP48/MSI1 family. Component of the HAT-B complex.

Its subcellular location is the cytoplasm. The protein resides in the nucleus. Its function is as follows. Regulatory subunit of the histone acetylase B (HAT-B) complex. The complex acetylates histone H4 which is required for telomeric silencing. The chain is Histone acetyltransferase type B subunit 2 (HAT2) from Encephalitozoon cuniculi (strain GB-M1) (Microsporidian parasite).